Here is a 379-residue protein sequence, read N- to C-terminus: Succinyl-diaminopimelate desuccinylase (379 aa).

His70 contributes to the Zn(2+) binding site. The active site involves Asp72. Zn(2+) is bound at residue Asp103. Glu137 functions as the Proton acceptor in the catalytic mechanism. Residues Glu138, Glu166, and His352 each contribute to the Zn(2+) site.

Belongs to the peptidase M20A family. DapE subfamily. Homodimer. Zn(2+) is required as a cofactor. Requires Co(2+) as cofactor.

It carries out the reaction N-succinyl-(2S,6S)-2,6-diaminopimelate + H2O = (2S,6S)-2,6-diaminopimelate + succinate. It functions in the pathway amino-acid biosynthesis; L-lysine biosynthesis via DAP pathway; LL-2,6-diaminopimelate from (S)-tetrahydrodipicolinate (succinylase route): step 3/3. In terms of biological role, catalyzes the hydrolysis of N-succinyl-L,L-diaminopimelic acid (SDAP), forming succinate and LL-2,6-diaminopimelate (DAP), an intermediate involved in the bacterial biosynthesis of lysine and meso-diaminopimelic acid, an essential component of bacterial cell walls. The polypeptide is Succinyl-diaminopimelate desuccinylase (Burkholderia pseudomallei (strain 1106a)).